We begin with the raw amino-acid sequence, 210 residues long: N-(5'-phosphoribosyl)anthranilate isomerase (210 aa).

It belongs to the TrpF family.

It carries out the reaction N-(5-phospho-beta-D-ribosyl)anthranilate = 1-(2-carboxyphenylamino)-1-deoxy-D-ribulose 5-phosphate. Its pathway is amino-acid biosynthesis; L-tryptophan biosynthesis; L-tryptophan from chorismate: step 3/5. This chain is N-(5'-phosphoribosyl)anthranilate isomerase, found in Staphylococcus aureus (strain Mu3 / ATCC 700698).